The primary structure comprises 79 residues: Sulfur carrier protein TusA (79 aa).

C17 acts as the Cysteine persulfide intermediate in catalysis.

The protein belongs to the sulfur carrier protein TusA family.

The protein resides in the cytoplasm. Sulfur carrier protein which probably makes part of a sulfur-relay system. The chain is Sulfur carrier protein TusA from Haemophilus influenzae (strain 86-028NP).